The chain runs to 439 residues: CBL-interacting protein kinase 14 (439 aa).

A Protein kinase domain is found at 12 to 267 (YELGRLLGKG…IQKIKESTWF (256 aa)). ATP-binding positions include 18–26 (LGKGTFGKV) and Lys41. Asp135 functions as the Proton acceptor in the catalytic mechanism. The tract at residues 153–182 (DFGLSALSESKRQDGLLHTTCGTPAYVAPE) is activation loop. Residues 298 to 333 (RKKNAHEDVKPMSVTNLNAFEIISFSKGFDLSGMFI) enclose the NAF domain. The interval 338-367 (RNEARFTSDKSASTIISKLEDVAKALNLRV) is PPI.

Belongs to the protein kinase superfamily. CAMK Ser/Thr protein kinase family. SNF1 subfamily. The cofactor is Mn(2+).

It catalyses the reaction L-seryl-[protein] + ATP = O-phospho-L-seryl-[protein] + ADP + H(+). It carries out the reaction L-threonyl-[protein] + ATP = O-phospho-L-threonyl-[protein] + ADP + H(+). Its function is as follows. CIPK serine-threonine protein kinases interact with CBL proteins. Binding of a CBL protein to the regulatory NAF domain of CIPK protein lead to the activation of the kinase in a calcium-dependent manner. This Oryza sativa subsp. japonica (Rice) protein is CBL-interacting protein kinase 14 (CIPK14).